A 262-amino-acid polypeptide reads, in one-letter code: Cerebellar degeneration-related antigen 1 (262 aa).

34 consecutive repeat copies span residues 3–8 (WLEDVD), 9–14 (FLEDVP), 15–20 (LLEDIP), 21–26 (LLEDVP), 27–32 (LLEDVP), 33–38 (LLEDTS), 39–44 (RLEDIN), 45–50 (LMEDMA), 51–56 (LLEDVD), 57–62 (LLEDTD), 63–68 (FLEDLD), 69–74 (FSEAMD), 75–80 (LREDKD), 81–86 (FLEDMD), 87–92 (SLEDMA), 93–98 (LLEDVD), 99–104 (LLEDTD), 105–110 (FLEDPD), 111–116 (FLEAID), 117–122 (LREDKD), 123–128 (FLEDMD), 129–134 (SLEDLE), 135–140 (AIGRCG), 141–146 (FSGRHG), 147–152 (FFGRRR), 153–158 (FSGRPK), 159–164 (LSGRLG), 165–170 (LLGRRG), 171–176 (FSGRLG), 177–182 (GYWKTW), 183–188 (IFWKTW), 189–194 (IFWKTW), 195–200 (IFRKTY), and 201–206 (IGWKTW). The interval 3 to 140 (WLEDVDFLED…EDLEAIGRCG (138 aa)) is 23 X 6 AA approximate repeats. The 6 X 6 AA approximate repeats stretch occupies residues 141–176 (FSGRHGFFGRRRFSGRPKLSGRLGLLGRRGFSGRLG). A 5 X 6 AA approximate repeats region spans residues 177–206 (GYWKTWIFWKTWIFWKTWIFRKTYIGWKTW).

As to expression, brain; predominantly expressed in normal neuroectodermal tissues and in certain malignant tumors.

The protein is Cerebellar degeneration-related antigen 1 (CDR1) of Homo sapiens (Human).